We begin with the raw amino-acid sequence, 453 residues long: Jacalin-related lectin 40 (453 aa).

Jacalin-type lectin domains lie at 1 to 142 (MAQK…YFTT), 154 to 296 (HIKL…YFSS), and 306 to 449 (PEKL…YVVP). The residue at position 2 (alanine 2) is an N-acetylalanine.

This sequence belongs to the jacalin lectin family. As to expression, expressed in roots.

This Arabidopsis thaliana (Mouse-ear cress) protein is Jacalin-related lectin 40 (JAL40).